Here is a 279-residue protein sequence, read N- to C-terminus: MEAVVNLYQEVMKHADPRIQGYPLMGSPLLMTSILLTYVYFVLSLGPRIMANRKPFQLRGFMIVYNFSLVALSLYIVYEFLMSGWLSTYTWRCDPVDYSNSPEALRMVRVAWLFLFSKFIELMDTVIFILRKKDGQVTFLHVFHHSVLPWSWWWGVKIAPGGMGSFHAMINSSVHVIMYLYYGLSAFGPVAQPYLWWKKHMTAIQLIQFVLVSLHISQYYFMSSCNYQYPVIIHLIWMYGTIFFMLFSNFWYHSYTKGKRLPRALQQNGAPGIAKVKAN.

Met1 is subject to N-acetylmethionine. The next 7 membrane-spanning stretches (helical) occupy residues 23–43 (PLMG…YFVL), 61–81 (FMIV…YEFL), 110–130 (VAWL…IFIL), 137–154 (VTFL…SWWW), 176–196 (VIMY…PYLW), 201–221 (MTAI…QYYF), and 231–251 (VIIH…SNFW). The Di-lysine motif motif lies at 275–279 (KVKAN).

It belongs to the ELO family. ELOVL1 subfamily. Interacts with LASS2 and HSD17B12. Interacts with TECR. In terms of tissue distribution, ubiquitous.

It localises to the endoplasmic reticulum membrane. The catalysed reaction is a very-long-chain acyl-CoA + malonyl-CoA + H(+) = a very-long-chain 3-oxoacyl-CoA + CO2 + CoA. It catalyses the reaction eicosanoyl-CoA + malonyl-CoA + H(+) = 3-oxodocosanoyl-CoA + CO2 + CoA. It carries out the reaction (11Z)-eicosenoyl-CoA + malonyl-CoA + H(+) = 3-oxo-(13Z)-docosenoyl-CoA + CO2 + CoA. The enzyme catalyses docosanoyl-CoA + malonyl-CoA + H(+) = 3-oxotetracosanoyl-CoA + CO2 + CoA. The catalysed reaction is (13Z)-docosenoyl-CoA + malonyl-CoA + H(+) = 3-oxo-(15Z)-tetracosenoyl-CoA + CO2 + CoA. It catalyses the reaction tetracosanoyl-CoA + malonyl-CoA + H(+) = 3-oxohexacosanoyl-CoA + CO2 + CoA. It carries out the reaction hexacosanoyl-CoA + malonyl-CoA + H(+) = 3-oxooctacosanyol-CoA + CO2 + CoA. The enzyme catalyses octadecanoyl-CoA + malonyl-CoA + H(+) = 3-oxoeicosanoyl-CoA + CO2 + CoA. It functions in the pathway lipid metabolism; fatty acid biosynthesis. Its function is as follows. Catalyzes the first and rate-limiting reaction of the four reactions that constitute the long-chain fatty acids elongation cycle. This endoplasmic reticulum-bound enzymatic process allows the addition of 2 carbons to the chain of long- and very long-chain fatty acids (VLCFAs) per cycle. Condensing enzyme that exhibits activity toward saturated and monounsaturated acyl-CoA substrates, with the highest activity towards C22:0 acyl-CoA. May participate in the production of both saturated and monounsaturated VLCFAs of different chain lengths that are involved in multiple biological processes as precursors of membrane lipids and lipid mediators. Important for saturated C24:0 and monounsaturated C24:1 sphingolipid synthesis. Indirectly inhibits RPE65 via production of VLCFAs. This is Very long chain fatty acid elongase 1 from Homo sapiens (Human).